A 615-amino-acid polypeptide reads, in one-letter code: Matrix metalloproteinase-25 (615 aa).

The propeptide occupies 1–162; sequence MCFPGSQISP…AAGLVRRRRR (162 aa). A helical membrane pass occupies residues 53-73; that stretch reads ILRLPAFGLPLLALLLVPLLP. Residues 143–150 carry the Cysteine switch motif; that stretch reads PRCSLPDV. Residues Cys-145 and His-287 each contribute to the Zn(2+) site. Glu-288 is an active-site residue. Positions 291 and 297 each coordinate Zn(2+). The interval 336-366 is disordered; sequence VSQNPNARPTRKPLVPPPQPPAMPPDSPATP. Pro residues predominate over residues 349–366; sequence LVPPPQPPAMPPDSPATP. Hemopexin repeat units follow at residues 368–417, 421–466, 467–515, and 516–562; these read PDRC…WEGL, VKVI…GLPP, GEDV…DGAP, and FAPD…WLDC. Cys-371 and Cys-562 are joined by a disulfide. The segment at 547-582 is disordered; it reads AESDSPQPIGPKWLDCPAPNSDPRVTSPPKTTSKTR. Ala-593 carries the GPI-anchor amidated alanine lipid modification. Residues 594–615 constitute a propeptide, removed in mature form; the sequence is SEQLSPLLLPLLPLVAGEVFSY.

It belongs to the peptidase M10A family. Requires Zn(2+) as cofactor. Ca(2+) serves as cofactor. In terms of processing, the precursor is cleaved by a furin endopeptidase.

Its subcellular location is the cell membrane. In terms of biological role, may activate progelatinase A. This is Matrix metalloproteinase-25 (Mmp25) from Mus musculus (Mouse).